The primary structure comprises 349 residues: ATP synthase subunit a-2 (349 aa).

A propeptide spanning residues Met-1 to Pro-97 is cleaved from the precursor. 7 helical membrane passes run Phe-118–Ile-138, Phe-184–Ile-204, His-213–Phe-233, Phe-240–Leu-260, Met-280–Met-300, Ile-303–Glu-323, and Val-326–Ile-346.

The protein belongs to the ATPase A chain family. In terms of assembly, F-type ATPases have 2 components, CF(1) - the catalytic core - and CF(0) - the membrane proton channel. CF(1) has five subunits: alpha(3), beta(3), gamma(1), delta(1), epsilon(1). CF(0) has three main subunits: a, b and c.

The protein localises to the mitochondrion inner membrane. Its function is as follows. Mitochondrial membrane ATP synthase (F(1)F(0) ATP synthase or Complex V) produces ATP from ADP in the presence of a proton gradient across the membrane which is generated by electron transport complexes of the respiratory chain. F-type ATPases consist of two structural domains, F(1) - containing the extramembraneous catalytic core and F(0) - containing the membrane proton channel, linked together by a central stalk and a peripheral stalk. During catalysis, ATP synthesis in the catalytic domain of F(1) is coupled via a rotary mechanism of the central stalk subunits to proton translocation. Key component of the proton channel; it may play a direct role in the translocation of protons across the membrane. In Arabidopsis thaliana (Mouse-ear cress), this protein is ATP synthase subunit a-2 (ATP6-2).